The chain runs to 133 residues: Small ribosomal subunit protein uS8 (133 aa).

Belongs to the universal ribosomal protein uS8 family. In terms of assembly, part of the 30S ribosomal subunit. Contacts proteins S5 and S12.

Its function is as follows. One of the primary rRNA binding proteins, it binds directly to 16S rRNA central domain where it helps coordinate assembly of the platform of the 30S subunit. This is Small ribosomal subunit protein uS8 from Chlamydia caviae (strain ATCC VR-813 / DSM 19441 / 03DC25 / GPIC) (Chlamydophila caviae).